The following is a 101-amino-acid chain: NAD(P)H-quinone oxidoreductase subunit 4L, chloroplastic (101 aa).

A run of 3 helical transmembrane segments spans residues 2 to 22 (ILEH…YGLI), 32 to 52 (MCLE…SDFF), and 61 to 81 (IFCI…LAIV).

The protein belongs to the complex I subunit 4L family. NDH is composed of at least 16 different subunits, 5 of which are encoded in the nucleus.

Its subcellular location is the plastid. It is found in the chloroplast thylakoid membrane. It carries out the reaction a plastoquinone + NADH + (n+1) H(+)(in) = a plastoquinol + NAD(+) + n H(+)(out). It catalyses the reaction a plastoquinone + NADPH + (n+1) H(+)(in) = a plastoquinol + NADP(+) + n H(+)(out). NDH shuttles electrons from NAD(P)H:plastoquinone, via FMN and iron-sulfur (Fe-S) centers, to quinones in the photosynthetic chain and possibly in a chloroplast respiratory chain. The immediate electron acceptor for the enzyme in this species is believed to be plastoquinone. Couples the redox reaction to proton translocation, and thus conserves the redox energy in a proton gradient. The chain is NAD(P)H-quinone oxidoreductase subunit 4L, chloroplastic from Olimarabidopsis pumila (Dwarf rocket).